The primary structure comprises 1465 residues: Transcriptional elongation regulator MINIYO (1465 aa).

Disordered regions lie at residues 27–85 (KGIS…AEER), 186–211 (LNAS…ESDI), and 1113–1135 (TIHE…SSTI).

The protein belongs to the RPAP1 family. As to quaternary structure, interacts with HAG3, NRPB3 and NRPB10L. Expressed in root and shoot apices and in leaf and flower primordia. Detected in the endosperm, embryo, meristems and in organ primordia, but not in mature cells. Found exclusively in the vascular bundles in mature leaves.

The protein localises to the cytoplasm. The protein resides in the nucleus. Positive regulator of transcriptional elongation that is essential for cells to initiate differentiation. Interacts with RNA polymerase II and the Elongator complex and is required to sustain global levels of transcriptional elongation activity, specifically in differentiating tissues. The chain is Transcriptional elongation regulator MINIYO from Arabidopsis thaliana (Mouse-ear cress).